Here is a 535-residue protein sequence, read N- to C-terminus: Phosphoenolpyruvate carboxykinase (ATP) (535 aa).

R59, Y201, and K207 together coordinate substrate. Residues K207, H226, and 243 to 251 (GLSGTGKTT) contribute to the ATP site. K207 and H226 together coordinate Mn(2+). D264 lines the Mn(2+) pocket. Residues E292, R328, 444–445 (RI), and T450 each bind ATP. R328 lines the substrate pocket.

Belongs to the phosphoenolpyruvate carboxykinase (ATP) family. It depends on Mn(2+) as a cofactor.

Its subcellular location is the cytoplasm. The enzyme catalyses oxaloacetate + ATP = phosphoenolpyruvate + ADP + CO2. It participates in carbohydrate biosynthesis; gluconeogenesis. In terms of biological role, involved in the gluconeogenesis. Catalyzes the conversion of oxaloacetate (OAA) to phosphoenolpyruvate (PEP) through direct phosphoryl transfer between the nucleoside triphosphate and OAA. The chain is Phosphoenolpyruvate carboxykinase (ATP) from Parabacteroides distasonis (strain ATCC 8503 / DSM 20701 / CIP 104284 / JCM 5825 / NCTC 11152).